A 70-amino-acid polypeptide reads, in one-letter code: Exodeoxyribonuclease 7 small subunit (70 aa).

The protein belongs to the XseB family. Heterooligomer composed of large and small subunits.

It localises to the cytoplasm. The enzyme catalyses Exonucleolytic cleavage in either 5'- to 3'- or 3'- to 5'-direction to yield nucleoside 5'-phosphates.. Bidirectionally degrades single-stranded DNA into large acid-insoluble oligonucleotides, which are then degraded further into small acid-soluble oligonucleotides. The polypeptide is Exodeoxyribonuclease 7 small subunit (Streptococcus gordonii (strain Challis / ATCC 35105 / BCRC 15272 / CH1 / DL1 / V288)).